The following is a 109-amino-acid chain: Nucleoid-associated protein VP2178 (109 aa).

Disordered stretches follow at residues 1–22 (MFGKGGMGNLMKQAQQMQERMQ) and 88–109 (QKEKMASVTGGMQLPPGMKMPF).

The protein belongs to the YbaB/EbfC family. In terms of assembly, homodimer.

It localises to the cytoplasm. The protein localises to the nucleoid. Binds to DNA and alters its conformation. May be involved in regulation of gene expression, nucleoid organization and DNA protection. In Vibrio parahaemolyticus serotype O3:K6 (strain RIMD 2210633), this protein is Nucleoid-associated protein VP2178.